Consider the following 328-residue polypeptide: Phenylalanine--tRNA ligase alpha subunit (328 aa).

Glu-253 provides a ligand contact to Mg(2+).

This sequence belongs to the class-II aminoacyl-tRNA synthetase family. Phe-tRNA synthetase alpha subunit type 1 subfamily. Tetramer of two alpha and two beta subunits. It depends on Mg(2+) as a cofactor.

The protein localises to the cytoplasm. The enzyme catalyses tRNA(Phe) + L-phenylalanine + ATP = L-phenylalanyl-tRNA(Phe) + AMP + diphosphate + H(+). The sequence is that of Phenylalanine--tRNA ligase alpha subunit from Actinobacillus pleuropneumoniae serotype 7 (strain AP76).